A 760-amino-acid chain; its full sequence is E4 SUMO-protein ligase PIAL2 (760 aa).

An interacting domain (IND), required for interaction with MOM1 and PIAL1 region spans residues 143 to 301 (IKSPGSTFSQ…GVIEASPDSD (159 aa)). The SP-RING-type zinc-finger motif lies at 298 to 379 (PDSDIIEGPS…MAKILKDVEH (82 aa)). 4 residues coordinate Zn(2+): Cys-329, His-331, Cys-352, and Cys-355. The span at 440–450 (GDNKVEDRKPC) shows a compositional bias: basic and acidic residues. Disordered regions lie at residues 440-471 (GDNK…SNDD), 492-522 (LGNT…MSID), 631-657 (GVRG…SVSR), and 699-760 (SQQS…GPTS). Polar residues-rich tracts occupy residues 492-518 (LGNT…SQIP), 631-653 (GVRG…PTVQ), and 699-729 (SQQS…SPFT).

This sequence belongs to the PIAL protein ligase family. In terms of assembly, homodimer. Interacts with MOM1 and PIAL1 to form a high molecular mass complex which mediates transcriptional silencing at heterochromatin regions. In terms of tissue distribution, expressed in leaves, stems and flowers, and, at low levels, in siliques and old leaves.

It localises to the nucleus. It participates in protein modification; protein sumoylation. Functionally, together with MOM1 and PIAL1, regulates transcriptional gene silencing (TGS) independently of changes in DNA methylation. E4-type SUMO ligase that promotes SUMO chain formation in a SCE1-dependent manner and thus contributes to a pathway for proteolytic removal of sumoylation substrates. Involved in stress responses and sulfur metabolism. This Arabidopsis thaliana (Mouse-ear cress) protein is E4 SUMO-protein ligase PIAL2.